A 248-amino-acid chain; its full sequence is 3-deoxy-manno-octulosonate cytidylyltransferase (248 aa).

This sequence belongs to the KdsB family.

Its subcellular location is the cytoplasm. The catalysed reaction is 3-deoxy-alpha-D-manno-oct-2-ulosonate + CTP = CMP-3-deoxy-beta-D-manno-octulosonate + diphosphate. The protein operates within nucleotide-sugar biosynthesis; CMP-3-deoxy-D-manno-octulosonate biosynthesis; CMP-3-deoxy-D-manno-octulosonate from 3-deoxy-D-manno-octulosonate and CTP: step 1/1. Its pathway is bacterial outer membrane biogenesis; lipopolysaccharide biosynthesis. Activates KDO (a required 8-carbon sugar) for incorporation into bacterial lipopolysaccharide in Gram-negative bacteria. The chain is 3-deoxy-manno-octulosonate cytidylyltransferase from Escherichia coli O127:H6 (strain E2348/69 / EPEC).